We begin with the raw amino-acid sequence, 212 residues long: Pyrrolidone-carboxylate peptidase (212 aa).

Active-site residues include E80, C143, and H165.

It belongs to the peptidase C15 family. Homotetramer.

The protein resides in the cytoplasm. The catalysed reaction is Release of an N-terminal pyroglutamyl group from a polypeptide, the second amino acid generally not being Pro.. In terms of biological role, removes 5-oxoproline from various penultimate amino acid residues except L-proline. The chain is Pyrrolidone-carboxylate peptidase from Vibrio vulnificus (strain CMCP6).